Consider the following 141-residue polypeptide: Nucleoside diphosphate kinase (141 aa).

The ATP site is built by Lys-11, Phe-59, Arg-87, Thr-93, Arg-104, and Asn-114. His-117 (pros-phosphohistidine intermediate) is an active-site residue.

It belongs to the NDK family. Homotetramer. Requires Mg(2+) as cofactor.

The protein localises to the cytoplasm. It catalyses the reaction a 2'-deoxyribonucleoside 5'-diphosphate + ATP = a 2'-deoxyribonucleoside 5'-triphosphate + ADP. The catalysed reaction is a ribonucleoside 5'-diphosphate + ATP = a ribonucleoside 5'-triphosphate + ADP. Its function is as follows. Major role in the synthesis of nucleoside triphosphates other than ATP. The ATP gamma phosphate is transferred to the NDP beta phosphate via a ping-pong mechanism, using a phosphorylated active-site intermediate. In Delftia acidovorans (strain DSM 14801 / SPH-1), this protein is Nucleoside diphosphate kinase.